The primary structure comprises 89 residues: Serine-rich and transmembrane domain-containing 2 (89 aa).

N11 is a glycosylation site (N-linked (GlcNAc...) asparagine). A helical transmembrane segment spans residues Y38–L58.

The protein localises to the membrane. In Mus musculus (Mouse), this protein is Serine-rich and transmembrane domain-containing 2.